We begin with the raw amino-acid sequence, 59 residues long: Ribosome biogenesis protein Nop10 (59 aa).

This sequence belongs to the NOP10 family.

In terms of biological role, involved in ribosome biogenesis; more specifically in 18S rRNA pseudouridylation and in cleavage of pre-rRNA. The protein is Ribosome biogenesis protein Nop10 of Thermococcus sibiricus (strain DSM 12597 / MM 739).